The following is a 591-amino-acid chain: Paralemmin-3 (591 aa).

Repeats lie at residues 171–174 (EKNK), 183–186 (EKNQ), 224–227 (EKNQ), and 234–237 (KNQD). Over residues 282 to 293 (DQTQSTSDQNME) the composition is skewed to polar residues. Disordered regions lie at residues 282 to 317 (DQTQ…TKDQ), 332 to 413 (KGTT…QNQD), and 515 to 591 (PDLK…CVVM). Composition is skewed to basic and acidic residues over residues 306–317 (SQSEGKIQTKDQ) and 349–383 (EPKE…DMDP). Polar residues-rich tracts occupy residues 385–413 (QLST…QNQD) and 528–542 (QESS…TIAQ). The span at 543–554 (SSSAEGNSSPES) shows a compositional bias: low complexity. Over residues 559 to 575 (QKSQGTDSQQGGNTATQ) the composition is skewed to polar residues. The Nuclear localization signal signature appears at 579–583 (RRKKK). S-palmitoyl cysteine attachment occurs at residues Cys-585 and Cys-587. Position 588 is a cysteine methyl ester (Cys-588). Cys-588 carries S-farnesyl cysteine lipidation. Residues 589–591 (VVM) constitute a propeptide, removed in mature form.

Belongs to the paralemmin family. In terms of processing, may be phosphorylated during oocyte maturation. Palmitoylated on Cys-585 and Cys-587 and prenylated on Cys-588; which is required for membrane association. In terms of tissue distribution, in Xenopus oocyte, in the central nervous system cells of tadpoles and adult frogs, and transiently in epithelial cells of stomach and gut of tadpoles. Highly expressed in kidney.

The protein resides in the cytoplasm. It localises to the nucleus. The protein localises to the cell membrane. In terms of biological role, maternal ATP-binding protein that may have multiple functions during development, one of which may be associated with the development and maintenance of the central nervous system. The protein is Paralemmin-3 (palm3) of Xenopus laevis (African clawed frog).